Reading from the N-terminus, the 460-residue chain is 3-isopropylmalate dehydratase large subunit (460 aa).

Cys338, Cys398, and Cys401 together coordinate [4Fe-4S] cluster.

It belongs to the aconitase/IPM isomerase family. LeuC type 1 subfamily. Heterodimer of LeuC and LeuD. [4Fe-4S] cluster is required as a cofactor.

It catalyses the reaction (2R,3S)-3-isopropylmalate = (2S)-2-isopropylmalate. Its pathway is amino-acid biosynthesis; L-leucine biosynthesis; L-leucine from 3-methyl-2-oxobutanoate: step 2/4. Catalyzes the isomerization between 2-isopropylmalate and 3-isopropylmalate, via the formation of 2-isopropylmaleate. The chain is 3-isopropylmalate dehydratase large subunit from Streptococcus thermophilus (strain ATCC BAA-491 / LMD-9).